The chain runs to 300 residues: N-acetylmuramic acid 6-phosphate etherase (300 aa).

In terms of domain architecture, SIS spans 57–220 (VSAAFARQGR…SSAAMIRSGK (164 aa)). The active-site Proton donor is the Glu-85. The active site involves Glu-116.

This sequence belongs to the GCKR-like family. MurNAc-6-P etherase subfamily. In terms of assembly, homodimer.

It carries out the reaction N-acetyl-D-muramate 6-phosphate + H2O = N-acetyl-D-glucosamine 6-phosphate + (R)-lactate. The protein operates within amino-sugar metabolism; N-acetylmuramate degradation. It participates in amino-sugar metabolism; 1,6-anhydro-N-acetylmuramate degradation. Its pathway is cell wall biogenesis; peptidoglycan recycling. Specifically catalyzes the cleavage of the D-lactyl ether substituent of MurNAc 6-phosphate, producing GlcNAc 6-phosphate and D-lactate. Together with AnmK, is also required for the utilization of anhydro-N-acetylmuramic acid (anhMurNAc) either imported from the medium or derived from its own cell wall murein, and thus plays a role in cell wall recycling. In Edwardsiella ictaluri (strain 93-146), this protein is N-acetylmuramic acid 6-phosphate etherase.